The primary structure comprises 346 residues: L-glyceraldehyde 3-phosphate reductase (346 aa).

Residues Trp-33, Asp-61, Tyr-66, Ser-168, Gln-193, Thr-223, Leu-225, Gln-227, Lys-233, Ser-303, Gln-307, and Asn-311 each contribute to the NADP(+) site.

It belongs to the shaker potassium channel beta subunit family.

It catalyses the reaction a primary alcohol + NADP(+) = an aldehyde + NADPH + H(+). Functionally, aldo-keto reductase that catalyzes the stereospecific, NADPH-dependent reduction of L-glyceraldehyde 3-phosphate (L-GAP) to L-glycerol 3-phosphate (L-G3P). This chain is L-glyceraldehyde 3-phosphate reductase, found in Escherichia coli O157:H7.